The following is a 271-amino-acid chain: MMSEPVRVAITGGSGRMGRTLIEAARQQPSILLGAAIERAGSTLIGVDAGELAGVGAMNVAITDSLDKVVDDFDILIDFTSPEASIVHTDWCARNGKAIVIGTTGFNHAQKEQISAYSESTPIVMAPNMAVGVNLMWKLLEVAAKVMGDYTDIEIIEGHHRYKKDAPSGTALKMGEVIAEALGRDLEKCAEYGREGITGERDRETIGFSTIRAGDLVGEHTAMFADIGERIEITHKASSRMTFANGAMRAASWLAEEDPGLYDMQQVLGLN.

NAD(+) is bound by residues 12–17 and glutamate 38; that span reads GGSGRM. Arginine 39 lines the NADP(+) pocket. Residues 102 to 104 and 126 to 129 contribute to the NAD(+) site; these read GTT and APNM. The active-site Proton donor/acceptor is histidine 159. (S)-2,3,4,5-tetrahydrodipicolinate is bound at residue histidine 160. Catalysis depends on lysine 163, which acts as the Proton donor. Residue 169–170 participates in (S)-2,3,4,5-tetrahydrodipicolinate binding; sequence GT.

This sequence belongs to the DapB family.

Its subcellular location is the cytoplasm. It catalyses the reaction (S)-2,3,4,5-tetrahydrodipicolinate + NAD(+) + H2O = (2S,4S)-4-hydroxy-2,3,4,5-tetrahydrodipicolinate + NADH + H(+). The enzyme catalyses (S)-2,3,4,5-tetrahydrodipicolinate + NADP(+) + H2O = (2S,4S)-4-hydroxy-2,3,4,5-tetrahydrodipicolinate + NADPH + H(+). It functions in the pathway amino-acid biosynthesis; L-lysine biosynthesis via DAP pathway; (S)-tetrahydrodipicolinate from L-aspartate: step 4/4. Its function is as follows. Catalyzes the conversion of 4-hydroxy-tetrahydrodipicolinate (HTPA) to tetrahydrodipicolinate. This chain is 4-hydroxy-tetrahydrodipicolinate reductase, found in Shewanella sediminis (strain HAW-EB3).